The primary structure comprises 1175 residues: Tyrosine-protein phosphatase non-receptor type 21 (1175 aa).

The FERM domain maps to 23–308 (LVARIQLLNN…ARHKFYRLNQ (286 aa)). Over residues 395 to 421 (YSAHSTNSLNTPQPYLQPSPMSSNPSI) the composition is skewed to polar residues. The segment at 395-445 (YSAHSTNSLNTPQPYLQPSPMSSNPSIPGSDVMRPDYIPSHRHSALIPPSY) is disordered. A phosphoserine mark is found at S577, S589, S590, S637, S673, S710, S711, S798, S800, and S805. The interval 663–702 (DVAPRTFSAGSQSSVFSDKVKQEGTEEQGSGGYSHKKSLS) is disordered. Residues 897-1168 (VFTEYERILK…TFVYRVLIQF (272 aa)) form the Tyrosine-protein phosphatase domain. Substrate contacts are provided by residues E1068, 1109 to 1115 (CSAGVGR), and Q1153. The active-site Phosphocysteine intermediate is the C1109.

This sequence belongs to the protein-tyrosine phosphatase family. Non-receptor class subfamily. As to expression, particularly abundantly in adrenal glands.

It is found in the cytoplasm. The protein localises to the cytoskeleton. The enzyme catalyses O-phospho-L-tyrosyl-[protein] + H2O = L-tyrosyl-[protein] + phosphate. The polypeptide is Tyrosine-protein phosphatase non-receptor type 21 (Ptpn21) (Rattus norvegicus (Rat)).